Here is a 256-residue protein sequence, read N- to C-terminus: Phosphonates import ATP-binding protein PhnC (256 aa).

Residues 3–247 (LELKNISKTY…VLHKEIFTNV (245 aa)) enclose the ABC transporter domain. An ATP-binding site is contributed by 36-43 (GLSGAGKS).

It belongs to the ABC transporter superfamily. Phosphonates importer (TC 3.A.1.9.1) family. In terms of assembly, the complex is composed of two ATP-binding proteins (PhnC), two transmembrane proteins (PhnE) and a solute-binding protein (PhnD).

It localises to the cell inner membrane. It catalyses the reaction phosphonate(out) + ATP + H2O = phosphonate(in) + ADP + phosphate + H(+). Functionally, part of the ABC transporter complex PhnCDE involved in phosphonates import. Responsible for energy coupling to the transport system. This chain is Phosphonates import ATP-binding protein PhnC, found in Treponema denticola (strain ATCC 35405 / DSM 14222 / CIP 103919 / JCM 8153 / KCTC 15104).